We begin with the raw amino-acid sequence, 152 residues long: Large-conductance mechanosensitive channel (152 aa).

2 helical membrane passes run 14-34 (VIDL…VTSL) and 81-101 (GLFL…FIAI).

The protein belongs to the MscL family. As to quaternary structure, homopentamer.

It is found in the cell membrane. Channel that opens in response to stretch forces in the membrane lipid bilayer. May participate in the regulation of osmotic pressure changes within the cell. This chain is Large-conductance mechanosensitive channel, found in Clostridium perfringens (strain 13 / Type A).